The primary structure comprises 404 residues: Argininosuccinate synthase (404 aa).

ATP-binding positions include 11–19 (AYSGGLDTS) and Ala38. Tyr91 and Ser96 together coordinate L-citrulline. Gly121 is an ATP binding site. Residues Thr123, Asn127, and Asp128 each coordinate L-aspartate. Position 127 (Asn127) interacts with L-citrulline. Residues Arg131, Ser182, Ser191, Glu267, and Tyr279 each coordinate L-citrulline.

This sequence belongs to the argininosuccinate synthase family. Type 1 subfamily. As to quaternary structure, homotetramer.

Its subcellular location is the cytoplasm. It catalyses the reaction L-citrulline + L-aspartate + ATP = 2-(N(omega)-L-arginino)succinate + AMP + diphosphate + H(+). Its pathway is amino-acid biosynthesis; L-arginine biosynthesis; L-arginine from L-ornithine and carbamoyl phosphate: step 2/3. This is Argininosuccinate synthase from Paramagnetospirillum magneticum (strain ATCC 700264 / AMB-1) (Magnetospirillum magneticum).